Reading from the N-terminus, the 477-residue chain is UDP-N-acetylmuramate--L-alanine ligase (477 aa).

Residue 122–128 coordinates ATP; it reads GTHGKTT.

The protein belongs to the MurCDEF family.

The protein localises to the cytoplasm. It carries out the reaction UDP-N-acetyl-alpha-D-muramate + L-alanine + ATP = UDP-N-acetyl-alpha-D-muramoyl-L-alanine + ADP + phosphate + H(+). It participates in cell wall biogenesis; peptidoglycan biosynthesis. Cell wall formation. The sequence is that of UDP-N-acetylmuramate--L-alanine ligase from Xanthomonas euvesicatoria pv. vesicatoria (strain 85-10) (Xanthomonas campestris pv. vesicatoria).